A 588-amino-acid polypeptide reads, in one-letter code: L-fucose isomerase (588 aa).

Active-site proton acceptor residues include Glu335 and Asp359. Mn(2+)-binding residues include Glu335, Asp359, and His525.

The protein belongs to the L-fucose isomerase family. Requires Mn(2+) as cofactor.

The protein localises to the cytoplasm. It carries out the reaction L-fucose = L-fuculose. The protein operates within carbohydrate degradation; L-fucose degradation; L-lactaldehyde and glycerone phosphate from L-fucose: step 1/3. Converts the aldose L-fucose into the corresponding ketose L-fuculose. The chain is L-fucose isomerase from Streptococcus pneumoniae serotype 4 (strain ATCC BAA-334 / TIGR4).